A 448-amino-acid chain; its full sequence is uncharacterized protein (448 aa).

Lys-280 is modified (N6-(pyridoxal phosphate)lysine).

The protein belongs to the class-III pyridoxal-phosphate-dependent aminotransferase family.

The protein resides in the cytoplasm. It is found in the mitochondrion. This is an uncharacterized protein from Schizosaccharomyces pombe (strain 972 / ATCC 24843) (Fission yeast).